The following is a 276-amino-acid chain: Diacetylchitobiose uptake system permease protein DasC (276 aa).

The next 6 helical transmembrane spans lie at 14-34, 74-94, 105-125, 137-157, 186-206, and 241-261; these read TAVVLFIGLVFPVYWMFATAF, LIVTVCAVVFSLVIALAGSFA, GFIVGFMLAQMAPWEVMVIAI, SLVPLTLFYMMMILPFTILTL, VILPLLAPGLMSTSMFGFITA, and GATMAASSLFAIPILILFVYL. Residues 70–261 enclose the ABC transmembrane type-1 domain; the sequence is VSNSLIVTVC…IPILILFVYL (192 aa).

Belongs to the binding-protein-dependent transport system permease family. The complex is composed of two ATP-binding proteins (MsiK), two transmembrane proteins (DasB and DasC) and a solute-binding protein (DasA).

Its subcellular location is the cell membrane. Functionally, part of the ABC transporter complex DasABC-MsiK involved in N,N'-diacetylchitobiose ((GlcNAc)2) uptake. Responsible for the translocation of the substrate across the membrane. In Streptomyces coelicolor (strain ATCC BAA-471 / A3(2) / M145), this protein is Diacetylchitobiose uptake system permease protein DasC.